A 178-amino-acid polypeptide reads, in one-letter code: Ribonuclease M5 (178 aa).

In terms of domain architecture, Toprim spans 10 to 103 (DGVIVCEGKT…NSTKIGVAEA (94 aa)). 3 residues coordinate Mg(2+): Glu16, Asp62, and Asp64.

Belongs to the ribonuclease M5 family. Mg(2+) serves as cofactor.

The protein localises to the cytoplasm. It carries out the reaction Endonucleolytic cleavage of RNA, removing 21 and 42 nucleotides, respectively, from the 5'- and 3'-termini of a 5S-rRNA precursor.. Its function is as follows. Required for correct processing of both the 5' and 3' ends of 5S rRNA precursor. Cleaves both sides of a double-stranded region yielding mature 5S rRNA in one step. The chain is Ribonuclease M5 from Mycoplasma pneumoniae (strain ATCC 29342 / M129 / Subtype 1) (Mycoplasmoides pneumoniae).